We begin with the raw amino-acid sequence, 119 residues long: Ribonuclease P protein component (119 aa).

It belongs to the RnpA family. Consists of a catalytic RNA component (M1 or rnpB) and a protein subunit.

It carries out the reaction Endonucleolytic cleavage of RNA, removing 5'-extranucleotides from tRNA precursor.. RNaseP catalyzes the removal of the 5'-leader sequence from pre-tRNA to produce the mature 5'-terminus. It can also cleave other RNA substrates such as 4.5S RNA. The protein component plays an auxiliary but essential role in vivo by binding to the 5'-leader sequence and broadening the substrate specificity of the ribozyme. This Serratia proteamaculans (strain 568) protein is Ribonuclease P protein component.